Here is a 122-residue protein sequence, read N- to C-terminus: Large ribosomal subunit protein uL14 (122 aa).

It belongs to the universal ribosomal protein uL14 family. As to quaternary structure, part of the 50S ribosomal subunit. Forms a cluster with proteins L3 and L19. In the 70S ribosome, L14 and L19 interact and together make contacts with the 16S rRNA in bridges B5 and B8.

In terms of biological role, binds to 23S rRNA. Forms part of two intersubunit bridges in the 70S ribosome. The protein is Large ribosomal subunit protein uL14 of Chlorobium phaeovibrioides (strain DSM 265 / 1930) (Prosthecochloris vibrioformis (strain DSM 265)).